We begin with the raw amino-acid sequence, 322 residues long: Gluconeogenesis factor (322 aa).

NAD(+)-binding positions include Thr-13, 217–219 (NVM), 263–267 (KYAKE), and 300–301 (RH).

The protein belongs to the gluconeogenesis factor family.

Its subcellular location is the cytoplasm. Functionally, required for morphogenesis under gluconeogenic growth conditions. In Halalkalibacterium halodurans (strain ATCC BAA-125 / DSM 18197 / FERM 7344 / JCM 9153 / C-125) (Bacillus halodurans), this protein is Gluconeogenesis factor.